The chain runs to 891 residues: Fanconi-associated nuclease 1 homolog (891 aa).

The Mn(2+) site is built by E712, D833, E852, and V853. One can recognise a VRR-NUC domain in the interval 770-884 (GMAEEILIIS…GFNVEICKVR (115 aa)).

The protein belongs to the FAN1 family. The cofactor is Mn(2+). It depends on Mg(2+) as a cofactor.

The protein resides in the nucleus. The catalysed reaction is Hydrolytically removes 5'-nucleotides successively from the 3'-hydroxy termini of 3'-hydroxy-terminated oligonucleotides.. Its function is as follows. Nuclease required for the repair of DNA interstrand cross-links (ICLs). Acts as a 5'-3' exonuclease that anchors at a cut end of DNA and cleaves DNA successively at every third nucleotide, allowing to excise an ICL from one strand through flanking incisions. May act upstream of the helicase RECQL4A and the ATPase RAD5A, which is involved in error-free post-replicative repair. Functions independently of MUS81 pathway, but in a similar pathway with RECQ4A, RAD5A and MFH1 in ICL repair. The chain is Fanconi-associated nuclease 1 homolog from Arabidopsis thaliana (Mouse-ear cress).